The following is a 136-amino-acid chain: MTRFQVSLVSPESLLFSGQVDQVDLPGIEGDLGVLAGHAPIVVMLRPGIVTTVAGDIRDRFVILGGLAEFSQGELTILADSASSVDGFDLTRLKAQIDEMQESLAKQSVGDELDRAVAKFDHFKAIHTALAPATAF.

This sequence belongs to the ATPase epsilon chain family. In terms of assembly, F-type ATPases have 2 components, CF(1) - the catalytic core - and CF(0) - the membrane proton channel. CF(1) has five subunits: alpha(3), beta(3), gamma(1), delta(1), epsilon(1). CF(0) has three main subunits: a, b and c.

The protein resides in the cell inner membrane. Functionally, produces ATP from ADP in the presence of a proton gradient across the membrane. This Nitrobacter hamburgensis (strain DSM 10229 / NCIMB 13809 / X14) protein is ATP synthase epsilon chain 2.